The primary structure comprises 156 residues: Egg-lysin (156 aa).

The N-terminal stretch at 1–18 is a signal peptide; it reads MKLLVLCVFAMMATLAVS.

In terms of assembly, monomer. Homodimer. Molecules associate into dimers and then rapidly dissociate again. Interacts (as a monomer) with the egg vitelline layer protein VERL (via VERL repeats); each VERL chain can bind multiple copies of lysin. Sperm.

Its subcellular location is the cytoplasmic vesicle. It localises to the secretory vesicle. The protein resides in the acrosome lumen. Its function is as follows. Creates a 3 um hole in the egg vitelline layer through which the sperm passes. Does not have enzyme activity. Species-specific interaction between the sperm protein lysin and the egg protein VERL exposes a basic surface on lysin that may dissociate the egg vitelline layer via electrostatic repulsion. Plays a role in ensuring species-specific fertilization. This Haliotis cracherodii (Black abalone) protein is Egg-lysin.